A 250-amino-acid polypeptide reads, in one-letter code: 2,3-bisphosphoglycerate-dependent phosphoglycerate mutase (250 aa).

Residues 12–19, 25–26, Arg-64, 91–94, Lys-102, 118–119, and 185–186 each bind substrate; these read RHGQSAWN, TG, ERHY, RR, and GN. His-13 functions as the Tele-phosphohistidine intermediate in the catalytic mechanism. Glu-91 (proton donor/acceptor) is an active-site residue.

The protein belongs to the phosphoglycerate mutase family. BPG-dependent PGAM subfamily.

It carries out the reaction (2R)-2-phosphoglycerate = (2R)-3-phosphoglycerate. It functions in the pathway carbohydrate degradation; glycolysis; pyruvate from D-glyceraldehyde 3-phosphate: step 3/5. Its function is as follows. Catalyzes the interconversion of 2-phosphoglycerate and 3-phosphoglycerate. The polypeptide is 2,3-bisphosphoglycerate-dependent phosphoglycerate mutase (Corynebacterium efficiens (strain DSM 44549 / YS-314 / AJ 12310 / JCM 11189 / NBRC 100395)).